A 143-amino-acid chain; its full sequence is Polyadenylate-binding protein-interacting protein 2 (143 aa).

The short motif at 11-21 (TLNPNAPVFDP) is the PAM2-like element.

This chain is Polyadenylate-binding protein-interacting protein 2 (CID2), found in Arabidopsis thaliana (Mouse-ear cress).